A 378-amino-acid polypeptide reads, in one-letter code: Chaperone protein DnaJ (378 aa).

Residues 5 to 70 (DFYEVLGLSK…QKRAAYDQYG (66 aa)) form the J domain. The segment at 133–211 (GITKEIRIPT…CHGDGRVERY (79 aa)) adopts a CR-type zinc-finger fold. Residues C146, C149, C163, C166, C185, C188, C199, and C202 each contribute to the Zn(2+) site. CXXCXGXG motif repeat units follow at residues 146-153 (CDKCHGSG), 163-170 (CSTCHGAG), 185-192 (CPTCHGRG), and 199-206 (CSKCHGDG).

Belongs to the DnaJ family. Homodimer. It depends on Zn(2+) as a cofactor.

It localises to the cytoplasm. Functionally, participates actively in the response to hyperosmotic and heat shock by preventing the aggregation of stress-denatured proteins and by disaggregating proteins, also in an autonomous, DnaK-independent fashion. Unfolded proteins bind initially to DnaJ; upon interaction with the DnaJ-bound protein, DnaK hydrolyzes its bound ATP, resulting in the formation of a stable complex. GrpE releases ADP from DnaK; ATP binding to DnaK triggers the release of the substrate protein, thus completing the reaction cycle. Several rounds of ATP-dependent interactions between DnaJ, DnaK and GrpE are required for fully efficient folding. Also involved, together with DnaK and GrpE, in the DNA replication of plasmids through activation of initiation proteins. This is Chaperone protein DnaJ from Proteus mirabilis (strain HI4320).